The primary structure comprises 76 residues: Omega-conotoxin-like Ai6.3 (76 aa).

Positions 1–22 (MKLTCLMIVAVLFLTAWTFVTA) are cleaved as a signal peptide. A propeptide spanning residues 23-50 (VPDSSNALENLYLKAHHEMNNPEDSELN) is cleaved from the precursor. Cystine bridges form between Cys53-Cys67, Cys60-Cys71, and Cys66-Cys75.

This sequence belongs to the conotoxin O1 superfamily. In terms of tissue distribution, expressed by the venom duct.

It is found in the secreted. Omega-conotoxins act at presynaptic membranes, they bind and block voltage-gated calcium channels (Cav). This Conus ammiralis (Admiral cone) protein is Omega-conotoxin-like Ai6.3.